The chain runs to 330 residues: Glycine betaine/proline betaine-binding periplasmic protein (330 aa).

The signal sequence occupies residues 1 to 21 (MRHSVLFATAFATLISTQTFA). Substrate contacts are provided by residues Trp86, His90, and 161-163 (WGC). Cys157 and Cys163 form a disulfide bridge.

As to quaternary structure, the complex is composed of two ATP-binding proteins (ProV), two transmembrane proteins (ProW) and a solute-binding protein (ProX).

The protein localises to the periplasm. In terms of biological role, part of the ProU ABC transporter complex involved in glycine betaine and proline betaine uptake. Binds glycine betaine and proline betaine with high affinity. The polypeptide is Glycine betaine/proline betaine-binding periplasmic protein (Escherichia coli (strain K12)).